Here is a 734-residue protein sequence, read N- to C-terminus: Cell surface glycoprotein gp138B (734 aa).

Residues 1-20 form the signal peptide; it reads MKIILTLSIFLICFLQLGQS. 16 N-linked (GlcNAc...) asparagine glycosylation sites follow: Asn-58, Asn-89, Asn-124, Asn-198, Asn-224, Asn-392, Asn-420, Asn-435, Asn-482, Asn-498, Asn-523, Asn-596, Asn-605, Asn-614, Asn-621, and Asn-630. Residues 504–592 enclose the IPT/TIG domain; the sequence is PFIKSYGFLE…SSNEVTFYYF (89 aa). Positions 678–712 are disordered; that stretch reads GETPTPSTTPSTTPSTTPSTTPSSTPTQSPGDDGS. Residues 680–712 are compositionally biased toward low complexity; the sequence is TPTPSTTPSTTPSTTPSTTPSSTPTQSPGDDGS. 4 repeat units span residues 683–686, 687–690, 691–694, and 695–698. The tract at residues 683–698 is 4 X 4 AA tandem repeats of P-S-T-T; that stretch reads PSTTPSTTPSTTPSTT. Gly-708 is lipidated: GPI-like-anchor amidated glycine. Residues 709 to 734 constitute a propeptide, removed in mature form; the sequence is DDGSTSSTLSISFYLITLLLLTQQFI.

In terms of processing, the sugar chains may play important roles in cell fusion. The GPI-like-anchor contains a phosphoceramide group, rather than a phosphatidyl group.

It localises to the cell membrane. In terms of biological role, involved in the sexual cell fusion of D.discoideum. This chain is Cell surface glycoprotein gp138B (GP138B), found in Dictyostelium discoideum (Social amoeba).